The primary structure comprises 533 residues: GMP synthase [glutamine-hydrolyzing] (533 aa).

The region spanning 22 to 215 is the Glutamine amidotransferase type-1 domain; it reads RILILDFGSQ…THNVAGCSGT (194 aa). Cys-99 functions as the Nucleophile in the catalytic mechanism. Catalysis depends on residues His-189 and Glu-191. Residues 216 to 408 form the GMPS ATP-PPase domain; it reads WTMAGFRELE…LGIPESIVGR (193 aa). Residue 243–249 participates in ATP binding; the sequence is SGGVDSS.

As to quaternary structure, homodimer.

The catalysed reaction is XMP + L-glutamine + ATP + H2O = GMP + L-glutamate + AMP + diphosphate + 2 H(+). It functions in the pathway purine metabolism; GMP biosynthesis; GMP from XMP (L-Gln route): step 1/1. In terms of biological role, catalyzes the synthesis of GMP from XMP. The chain is GMP synthase [glutamine-hydrolyzing] from Gluconobacter oxydans (strain 621H) (Gluconobacter suboxydans).